A 353-amino-acid polypeptide reads, in one-letter code: MKSIAQEHDCLLIDLDGTVFCGRQPTGGAVQSLSQVRSRKLFVTNNASRSADEVAAHLCELGFTATGEDVVTSAQSAAHLLAGQLAPGARVLIVGTEALANEVAAVGLRPVRRFEDRPDAVVQGLSMTTGWSDLAEAALAIRAGALWVAANVDPTLPTERGLLPGNGSMVAALRTATGMDPRVAGKPAPALMTEAVARGDFRAALVVGDRLDTDIEGANAAGLPSLMVLTGVNSAWDAVYAEPVRRPTYIGHDLRSLHQDSKLLAVAPQPGWQIDVGGGAVTVCANGDVDDLEFIDDGLSIVRAVASAVWEARAADLHQRPLRIEAGDERARAALQRWSLMRSDHPVTSVGTQ.

The Nucleophile role is filled by aspartate 14. Mg(2+) is bound by residues aspartate 14, aspartate 16, and aspartate 209. Aspartate 16 serves as the catalytic Proton donor.

It belongs to the HAD-like hydrolase superfamily. Homodimer. Mg(2+) serves as cofactor. Co(2+) is required as a cofactor. It depends on Mn(2+) as a cofactor.

It catalyses the reaction sn-glycerol 1-phosphate + H2O = glycerol + phosphate. Its pathway is glycerolipid metabolism. Functionally, dephosphorylates D-glycerol 3-phosphate (sn-glycerol 1-phosphate). Is the final enzyme involved in the recycling/catabolism of glycerophospholipid polar heads. To a lesser extent, is also able to act on glycerol 2-phosphate and D-ribulose 5-phosphate, but cannot use D-glyceraldehyde 3-phosphate, dihydroxyacetone-phosphate, UMP or GMP as substrates. This chain is D-glycerol 3-phosphate phosphatase, found in Mycobacterium tuberculosis (strain ATCC 25618 / H37Rv).